The following is an 85-amino-acid chain: Toxin To9 (85 aa).

A signal peptide spans 1 to 19 (MNYSTLIAVASLLTAGTES). Residues 21–81 (KDGYPVKEGD…AAIKGYGRCR (61 aa)) form the LCN-type CS-alpha/beta domain. 4 disulfides stabilise this stretch: C31–C80, C35–C56, C42–C63, and C46–C65. P82 is modified (proline amide).

It belongs to the long (4 C-C) scorpion toxin superfamily. Sodium channel inhibitor family. Alpha subfamily. As to expression, expressed by the venom gland.

It is found in the secreted. Functionally, alpha toxins bind voltage-independently at site-3 of sodium channels (Nav) and inhibit the inactivation of the activated channels, thereby blocking neuronal transmission. The chain is Toxin To9 from Tityus obscurus (Amazonian scorpion).